The chain runs to 1083 residues: Ubiquitin carboxyl-terminal hydrolase 1 (1083 aa).

The UBP-type zinc-finger motif lies at 30 to 165 (RSCVHFDKYV…KKDLLLEVVK (136 aa)). Zn(2+)-binding residues include Cys32, His34, Cys56, Cys59, Cys95, Cys98, Cys103, His115, His119, His125, Cys139, and Cys142. One can recognise a USP domain in the interval 202 to 1083 (RGLVNLGNTC…EAYILFYERI (882 aa)). The active-site Nucleophile is the Cys211. 2 disordered regions span residues 387 to 424 (KDSE…DNET) and 450 to 486 (GSTE…ASGI). 2 stretches are compositionally biased toward basic and acidic residues: residues 409 to 419 (SDHKIQSRPET) and 455 to 473 (LMHD…EDVR). Residues 474-485 (ATQSNEETSASG) show a composition bias toward polar residues. The active-site Proton acceptor is His1029.

Belongs to the peptidase C19 family.

It carries out the reaction Thiol-dependent hydrolysis of ester, thioester, amide, peptide and isopeptide bonds formed by the C-terminal Gly of ubiquitin (a 76-residue protein attached to proteins as an intracellular targeting signal).. Its function is as follows. Recognizes and hydrolyzes the peptide bond at the C-terminal Gly of ubiquitin. Involved in the processing of poly-ubiquitin precursors as well as that of ubiquitinated proteins. Is involved in resistance to the arginine analog canavanine (CAN). This is Ubiquitin carboxyl-terminal hydrolase 1 (UBP1) from Arabidopsis thaliana (Mouse-ear cress).